The following is a 148-amino-acid chain: Cytochrome c-type biogenesis protein CcmE (148 aa).

At 1–7 (MKARNKR) the chain is on the cytoplasmic side. A helical; Signal-anchor for type II membrane protein transmembrane segment spans residues 8–28 (LMLVGGGIALLVAAAALVLSA). The Periplasmic segment spans residues 29–148 (FQQNLVFFHT…AHKTATTVQQ (120 aa)). The heme site is built by His-123 and Tyr-127.

Belongs to the CcmE/CycJ family.

Its subcellular location is the cell inner membrane. Functionally, heme chaperone required for the biogenesis of c-type cytochromes. Transiently binds heme delivered by CcmC and transfers the heme to apo-cytochromes in a process facilitated by CcmF and CcmH. The protein is Cytochrome c-type biogenesis protein CcmE of Azoarcus sp. (strain BH72).